A 315-amino-acid polypeptide reads, in one-letter code: Inosine-uridine preferring nucleoside hydrolase (315 aa).

Asp10 serves as a coordination point for Ca(2+). Asp14 contacts substrate. Residues Asp15 and Thr126 each coordinate Ca(2+). Positions 160, 166, and 168 each coordinate substrate. The active-site Proton donor is the His241. A Ca(2+)-binding site is contributed by Asp242.

In terms of assembly, homotetramer. The cofactor is Ca(2+).

The catalysed reaction is inosine + H2O = hypoxanthine + D-ribose. The enzyme catalyses uridine + H2O = D-ribose + uracil. Its pathway is purine metabolism; purine nucleoside salvage. In terms of biological role, catalyzes the hydrolysis of the N-glycosidic bond of commonly occurring purine and pyrimidine nucleosides into ribose and the base, but has a preference for inosine and uridine as substrates. Is not active on thymidine and 2'-deoxynucleosides. Functions in purine salvage from the blood of the host, a fundamental pathway since protozoan parasites such as C.fasciculata are incapable of de novo purine biosynthesis. In Crithidia fasciculata, this protein is Inosine-uridine preferring nucleoside hydrolase (IUNH).